Reading from the N-terminus, the 202-residue chain is Probable GTP-binding protein EngB (202 aa).

An EngB-type G domain is found at 22–197 (VFPEYAFIGR…LDYIENISKE (176 aa)). Residues 30 to 37 (GRSNVGKS), 57 to 61 (GKTML), 75 to 78 (DLPG), 142 to 145 (TKAD), and 173 to 178 (YFISSS) contribute to the GTP site. Residues S37 and T59 each contribute to the Mg(2+) site.

It belongs to the TRAFAC class TrmE-Era-EngA-EngB-Septin-like GTPase superfamily. EngB GTPase family. Requires Mg(2+) as cofactor.

Its function is as follows. Necessary for normal cell division and for the maintenance of normal septation. This is Probable GTP-binding protein EngB from Bacteroides thetaiotaomicron (strain ATCC 29148 / DSM 2079 / JCM 5827 / CCUG 10774 / NCTC 10582 / VPI-5482 / E50).